Reading from the N-terminus, the 300-residue chain is ATP synthase gamma chain (300 aa).

It belongs to the ATPase gamma chain family. As to quaternary structure, F-type ATPases have 2 components, CF(1) - the catalytic core - and CF(0) - the membrane proton channel. CF(1) has five subunits: alpha(3), beta(3), gamma(1), delta(1), epsilon(1). CF(0) has three main subunits: a, b and c.

It is found in the cell membrane. Produces ATP from ADP in the presence of a proton gradient across the membrane. The gamma chain is believed to be important in regulating ATPase activity and the flow of protons through the CF(0) complex. The polypeptide is ATP synthase gamma chain (Acidothermus cellulolyticus (strain ATCC 43068 / DSM 8971 / 11B)).